The sequence spans 464 residues: Arginine biosynthesis bifunctional protein ArgJ, mitochondrial (464 aa).

Substrate-binding residues include Thr191, Lys220, Thr231, Glu318, Asn459, and Thr464. The active-site Nucleophile is Thr231.

The protein belongs to the ArgJ family. As to quaternary structure, heterodimer of an alpha and a beta chain. Post-translationally, the alpha and beta chains are autoproteolytically processed from a single precursor protein within the mitochondrion.

It localises to the mitochondrion matrix. The catalysed reaction is N(2)-acetyl-L-ornithine + L-glutamate = N-acetyl-L-glutamate + L-ornithine. It carries out the reaction L-glutamate + acetyl-CoA = N-acetyl-L-glutamate + CoA + H(+). It functions in the pathway amino-acid biosynthesis; L-arginine biosynthesis; L-ornithine and N-acetyl-L-glutamate from L-glutamate and N(2)-acetyl-L-ornithine (cyclic): step 1/1. Its pathway is amino-acid biosynthesis; L-arginine biosynthesis; N(2)-acetyl-L-ornithine from L-glutamate: step 1/4. In terms of biological role, catalyzes two activities which are involved in the cyclic version of arginine biosynthesis: the synthesis of acetylglutamate from glutamate and acetyl-CoA, and of ornithine by transacetylation between acetylornithine and glutamate. This is Arginine biosynthesis bifunctional protein ArgJ, mitochondrial from Pyricularia oryzae (strain 70-15 / ATCC MYA-4617 / FGSC 8958) (Rice blast fungus).